Here is a 288-residue protein sequence, read N- to C-terminus: ATP synthase gamma chain (288 aa).

It belongs to the ATPase gamma chain family. F-type ATPases have 2 components, CF(1) - the catalytic core - and CF(0) - the membrane proton channel. CF(1) has five subunits: alpha(3), beta(3), gamma(1), delta(1), epsilon(1). CF(0) has three main subunits: a, b and c.

The protein resides in the cell inner membrane. In terms of biological role, produces ATP from ADP in the presence of a proton gradient across the membrane. The gamma chain is believed to be important in regulating ATPase activity and the flow of protons through the CF(0) complex. This chain is ATP synthase gamma chain, found in Blochmanniella floridana.